The chain runs to 630 residues: UvrABC system protein C (630 aa).

The tract at residues 1 to 96 (MGAEGLQGEG…GEAHRRGGTG (96 aa)) is disordered. The span at 9–28 (EGEVPPQGAGVPGQVQVGVH) shows a compositional bias: low complexity. Residues 52 to 125 (DPRGLPVEAG…IKAHRPLYNV (74 aa)) enclose the GIY-YIG domain. The segment covering 75–91 (RPGEKLLPRRGQGEAHR) has biased composition (basic and acidic residues). A UVR domain is found at 234-269 (DGLLQELEAKMREAARRLEFERAAEIRDQMEALRAF).

This sequence belongs to the UvrC family. As to quaternary structure, interacts with UvrB in an incision complex.

The protein resides in the cytoplasm. In terms of biological role, the UvrABC repair system catalyzes the recognition and processing of DNA lesions. UvrC both incises the 5' and 3' sides of the lesion. The N-terminal half is responsible for the 3' incision and the C-terminal half is responsible for the 5' incision. The protein is UvrABC system protein C of Thermus thermophilus (strain ATCC BAA-163 / DSM 7039 / HB27).